The following is a 238-amino-acid chain: Ribonuclease PH (238 aa).

Residues Arg-86 and 124–126 each bind phosphate; that span reads GTR.

Belongs to the RNase PH family. Homohexameric ring arranged as a trimer of dimers.

The enzyme catalyses tRNA(n+1) + phosphate = tRNA(n) + a ribonucleoside 5'-diphosphate. Functionally, phosphorolytic 3'-5' exoribonuclease that plays an important role in tRNA 3'-end maturation. Removes nucleotide residues following the 3'-CCA terminus of tRNAs; can also add nucleotides to the ends of RNA molecules by using nucleoside diphosphates as substrates, but this may not be physiologically important. Probably plays a role in initiation of 16S rRNA degradation (leading to ribosome degradation) during starvation. The sequence is that of Ribonuclease PH from Serratia proteamaculans (strain 568).